Here is a 232-residue protein sequence, read N- to C-terminus: Orotidine 5'-phosphate decarboxylase (232 aa).

Substrate contacts are provided by residues Asp-14, Lys-36, 63-72 (DLKFHDIPNT), Thr-122, Arg-183, Gln-192, Gly-212, and Arg-213. The active-site Proton donor is Lys-65.

This sequence belongs to the OMP decarboxylase family. Type 1 subfamily. In terms of assembly, homodimer.

The enzyme catalyses orotidine 5'-phosphate + H(+) = UMP + CO2. The protein operates within pyrimidine metabolism; UMP biosynthesis via de novo pathway; UMP from orotate: step 2/2. In terms of biological role, catalyzes the decarboxylation of orotidine 5'-monophosphate (OMP) to uridine 5'-monophosphate (UMP). The sequence is that of Orotidine 5'-phosphate decarboxylase from Psychrobacter arcticus (strain DSM 17307 / VKM B-2377 / 273-4).